A 448-amino-acid chain; its full sequence is Probable glycine dehydrogenase (decarboxylating) subunit 1 (448 aa).

This sequence belongs to the GcvP family. N-terminal subunit subfamily. The glycine cleavage system is composed of four proteins: P, T, L and H. In this organism, the P 'protein' is a heterodimer of two subunits.

It carries out the reaction N(6)-[(R)-lipoyl]-L-lysyl-[glycine-cleavage complex H protein] + glycine + H(+) = N(6)-[(R)-S(8)-aminomethyldihydrolipoyl]-L-lysyl-[glycine-cleavage complex H protein] + CO2. Its function is as follows. The glycine cleavage system catalyzes the degradation of glycine. The P protein binds the alpha-amino group of glycine through its pyridoxal phosphate cofactor; CO(2) is released and the remaining methylamine moiety is then transferred to the lipoamide cofactor of the H protein. The chain is Probable glycine dehydrogenase (decarboxylating) subunit 1 from Listeria monocytogenes serotype 4b (strain F2365).